We begin with the raw amino-acid sequence, 374 residues long: CC-adding tRNA nucleotidyltransferase (374 aa).

39 to 42 is a CTP binding site; the sequence is GAVR. Mg(2+)-binding residues include aspartate 52 and aspartate 54. Residues 126 to 127, asparagine 131, 171 to 180, and arginine 209 contribute to the CTP site; these read RD and DASRLVRAAR.

Belongs to the tRNA nucleotidyltransferase/poly(A) polymerase family. It depends on Mg(2+) as a cofactor.

The enzyme catalyses a tRNA precursor + 2 CTP = a tRNA with a 3' CC end + 2 diphosphate. In terms of biological role, tRNA nucleotidyltransferase involved in the synthesis of the tRNA CCA terminus. Adds the two cytidine residues to tRNA. The polypeptide is CC-adding tRNA nucleotidyltransferase (Deinococcus radiodurans (strain ATCC 13939 / DSM 20539 / JCM 16871 / CCUG 27074 / LMG 4051 / NBRC 15346 / NCIMB 9279 / VKM B-1422 / R1)).